Reading from the N-terminus, the 246-residue chain is 1-(5-phosphoribosyl)-5-[(5-phosphoribosylamino)methylideneamino] imidazole-4-carboxamide isomerase (246 aa).

The Proton acceptor role is filled by Asp7. Residue Asp129 is the Proton donor of the active site.

This sequence belongs to the HisA/HisF family.

The protein localises to the cytoplasm. The catalysed reaction is 1-(5-phospho-beta-D-ribosyl)-5-[(5-phospho-beta-D-ribosylamino)methylideneamino]imidazole-4-carboxamide = 5-[(5-phospho-1-deoxy-D-ribulos-1-ylimino)methylamino]-1-(5-phospho-beta-D-ribosyl)imidazole-4-carboxamide. It functions in the pathway amino-acid biosynthesis; L-histidine biosynthesis; L-histidine from 5-phospho-alpha-D-ribose 1-diphosphate: step 4/9. The polypeptide is 1-(5-phosphoribosyl)-5-[(5-phosphoribosylamino)methylideneamino] imidazole-4-carboxamide isomerase (Shewanella sediminis (strain HAW-EB3)).